The primary structure comprises 514 residues: 2,3-bisphosphoglycerate-independent phosphoglycerate mutase (514 aa).

2 residues coordinate Mn(2+): Asp14 and Ser64. The active-site Phosphoserine intermediate is Ser64. Residues His125, 155–156 (RD), Arg187, Arg193, 263–266 (RADR), and Lys336 contribute to the substrate site. Residues Asp403, His407, Asp444, His445, and His463 each coordinate Mn(2+).

This sequence belongs to the BPG-independent phosphoglycerate mutase family. In terms of assembly, monomer. Mn(2+) serves as cofactor.

It carries out the reaction (2R)-2-phosphoglycerate = (2R)-3-phosphoglycerate. It functions in the pathway carbohydrate degradation; glycolysis; pyruvate from D-glyceraldehyde 3-phosphate: step 3/5. Its function is as follows. Catalyzes the interconversion of 2-phosphoglycerate and 3-phosphoglycerate. The chain is 2,3-bisphosphoglycerate-independent phosphoglycerate mutase from Shewanella oneidensis (strain ATCC 700550 / JCM 31522 / CIP 106686 / LMG 19005 / NCIMB 14063 / MR-1).